Reading from the N-terminus, the 341-residue chain is HTH-type transcriptional repressor PurR (341 aa).

The region spanning 2-56 is the HTH lacI-type domain; the sequence is ATIKDVAKRANVSTTTVSHVINKTRFVAEETRNAVWAAIKELHYSPSAVARSLKV. A DNA-binding region (H-T-H motif) is located at residues 4 to 23; sequence IKDVAKRANVSTTTVSHVIN. Residues 48–56 mediate DNA binding; that stretch reads SAVARSLKV. Hypoxanthine-binding residues include Y73, R190, T192, F221, and D275.

As to quaternary structure, homodimer.

The protein operates within purine metabolism; purine nucleotide biosynthesis [regulation]. Its function is as follows. Is the main repressor of the genes involved in the de novo synthesis of purine nucleotides, regulating purB, purC, purEK, purF, purHD, purL, purMN and guaBA expression. PurR is allosterically activated to bind its cognate DNA by binding the purine corepressors, hypoxanthine or guanine, thereby effecting transcription repression. This is HTH-type transcriptional repressor PurR from Salmonella typhi.